We begin with the raw amino-acid sequence, 323 residues long: tRNA U34 carboxymethyltransferase (323 aa).

Carboxy-S-adenosyl-L-methionine-binding positions include lysine 91, tryptophan 105, lysine 110, glycine 130, 152–154 (DPT), 181–182 (IE), methionine 196, tyrosine 200, and arginine 315.

This sequence belongs to the class I-like SAM-binding methyltransferase superfamily. CmoB family. Homotetramer.

The catalysed reaction is carboxy-S-adenosyl-L-methionine + 5-hydroxyuridine(34) in tRNA = 5-carboxymethoxyuridine(34) in tRNA + S-adenosyl-L-homocysteine + H(+). In terms of biological role, catalyzes carboxymethyl transfer from carboxy-S-adenosyl-L-methionine (Cx-SAM) to 5-hydroxyuridine (ho5U) to form 5-carboxymethoxyuridine (cmo5U) at position 34 in tRNAs. In Salmonella agona (strain SL483), this protein is tRNA U34 carboxymethyltransferase.